The chain runs to 1059 residues: MPKRTDIHKIMVIGSGPIIIGQAAEFDYSGTQACLALKEEGYETVLVNSNPATIMTDKGIADHVYIEPLTVAALTRILRQEAPDVLLPTLGGQIGLNLAVALSKTGILDELGIELLGTKLASIDQAEDREKFKELMQELGEPVPASLTVSTVEQALAFAKTVGYPVIVRPAFTMGGTGGGLANNEAELAEIAKNGLELSPATQCLIEKSIAGYKEIEFEVMRDAADNTMVVCCMENFDPVGIHTGDSIVFAPSQTLADREYQRLRDCALKLISALKIEGGCNVQLALDPNSYDYNVIEVNPRVSRSSALASKATGYPIAKLAAKIAVGLTLDEIKNPVTKTTYAEFEPALDYVVVKIPRWPFDKFTKADRRLGSQMKATGEVMAIGRTAEEALLKAVASLEIDQKDLLSKEAAAASDRQLEDKLVHAQDDRLFYIAEAFRRGYSLADLHELTRINHYFLDIVAGLVEEEGRIKAAGLDKEVIYEAKRDGFADTTLATLLGQNPAAIRAFRKANGIVPVYKMVDTCAAEFDSATPYFYSTYETENESRRSAKPSVLVIGSGPIRIGQGVEFDYATVHCVRALQKLGYEAIVINSNPETVSTDFSVSDKLYFEPLTLENVLNVTDLEQPVGAIVQFGGQTAINLASGLEANGVKILGTTVADLDAAEDRELFDQVIKDLNLRQPIGMTATTRQGVLDAAKEIGYPVLVRPSYVLGGKAMEIVYGQAELEDYLNQNADVTGSHPILVDAYLEGAECEVDAICDGERVLLPGIMEHIEHAGVHSGDSMAVYPPQSLSGAVKVQIEEATKKLAVALKCVGIMNIQFIIHDGQAYVLEVNPRASRTVPFLSKVTGIEMAQLATKVILGHSLAEQGYRSGLAPESQMIHVKAPVFSFSKLGDVDSYLGPEMKSTGEVMGSDTTYEKALYKAFAGAGMEVPDNGAVLLTIEDNDKAQILPLAKRFLAIGYRILATSGTAAFLEENGLHPTVVAKLHEQGQPAILDVIKDKHVDLVINTMGHDDEKNSDGFIIRQTAIEHHVPLLTALDTVNALLRSLEMTSFKTTEL.

A carboxyphosphate synthetic domain region spans residues 1 to 401 (MPKRTDIHKI…ALLKAVASLE (401 aa)). 12 residues coordinate ATP: arginine 129, arginine 169, glycine 175, glycine 176, lysine 208, isoleucine 210, glutamate 215, glycine 241, isoleucine 242, histidine 243, glutamine 284, and glutamate 298. The 195-residue stretch at 133–327 (KELMQELGEP…IAKLAAKIAV (195 aa)) folds into the ATP-grasp 1 domain. Mg(2+) contacts are provided by glutamine 284, glutamate 298, and asparagine 300. Residues glutamine 284, glutamate 298, and asparagine 300 each contribute to the Mn(2+) site. Residues 402-546 (IDQKDLLSKE…YSTYETENES (145 aa)) form an oligomerization domain region. Positions 547 to 929 (RRSAKPSVLV…ALYKAFAGAG (383 aa)) are carbamoyl phosphate synthetic domain. The ATP-grasp 2 domain maps to 671 to 861 (DQVIKDLNLR…MAQLATKVIL (191 aa)). 10 residues coordinate ATP: arginine 707, alanine 746, leucine 748, glutamate 752, glycine 777, valine 778, histidine 779, serine 780, glutamine 820, and glutamate 832. Residues glutamine 820, glutamate 832, and asparagine 834 each coordinate Mg(2+). 3 residues coordinate Mn(2+): glutamine 820, glutamate 832, and asparagine 834. Residues 930 to 1059 (MEVPDNGAVL…EMTSFKTTEL (130 aa)) enclose the MGS-like domain. Residues 930-1059 (MEVPDNGAVL…EMTSFKTTEL (130 aa)) form an allosteric domain region.

It belongs to the CarB family. Composed of two chains; the small (or glutamine) chain promotes the hydrolysis of glutamine to ammonia, which is used by the large (or ammonia) chain to synthesize carbamoyl phosphate. Tetramer of heterodimers (alpha,beta)4. It depends on Mg(2+) as a cofactor. Requires Mn(2+) as cofactor.

It catalyses the reaction hydrogencarbonate + L-glutamine + 2 ATP + H2O = carbamoyl phosphate + L-glutamate + 2 ADP + phosphate + 2 H(+). The enzyme catalyses hydrogencarbonate + NH4(+) + 2 ATP = carbamoyl phosphate + 2 ADP + phosphate + 2 H(+). The protein operates within amino-acid biosynthesis; L-arginine biosynthesis; carbamoyl phosphate from bicarbonate: step 1/1. Its pathway is pyrimidine metabolism; UMP biosynthesis via de novo pathway; (S)-dihydroorotate from bicarbonate: step 1/3. Its function is as follows. Large subunit of the glutamine-dependent carbamoyl phosphate synthetase (CPSase). CPSase catalyzes the formation of carbamoyl phosphate from the ammonia moiety of glutamine, carbonate, and phosphate donated by ATP, constituting the first step of 2 biosynthetic pathways, one leading to arginine and/or urea and the other to pyrimidine nucleotides. The large subunit (synthetase) binds the substrates ammonia (free or transferred from glutamine from the small subunit), hydrogencarbonate and ATP and carries out an ATP-coupled ligase reaction, activating hydrogencarbonate by forming carboxy phosphate which reacts with ammonia to form carbamoyl phosphate. This Limosilactobacillus fermentum (strain NBRC 3956 / LMG 18251) (Lactobacillus fermentum) protein is Carbamoyl phosphate synthase large chain.